A 122-amino-acid polypeptide reads, in one-letter code: Fluoride-specific ion channel FluC (122 aa).

4 helical membrane-spanning segments follow: residues 4–24 (LAVLVGGGVGALVRYLVSIFI), 33–53 (LGTMVINTTGAFLIGFLSIYL), 66–86 (LLITGFLGGYTTFSTFTLEGI), and 95–115 (LKAFYYIVGTNVIGFLFVALG). The Na(+) site is built by G73 and T76.

It belongs to the fluoride channel Fluc/FEX (TC 1.A.43) family.

The protein resides in the cell inner membrane. The enzyme catalyses fluoride(in) = fluoride(out). Its activity is regulated as follows. Na(+) is not transported, but it plays an essential structural role and its presence is essential for fluoride channel function. Its function is as follows. Fluoride-specific ion channel. Important for reducing fluoride concentration in the cell, thus reducing its toxicity. This is Fluoride-specific ion channel FluC from Hydrogenobaculum sp. (strain Y04AAS1).